Here is a 203-residue protein sequence, read N- to C-terminus: Ribosomal RNA large subunit methyltransferase E (203 aa).

Residues G51, W53, D69, D85, and D108 each coordinate S-adenosyl-L-methionine. Catalysis depends on K148, which acts as the Proton acceptor.

This sequence belongs to the class I-like SAM-binding methyltransferase superfamily. RNA methyltransferase RlmE family.

Its subcellular location is the cytoplasm. It carries out the reaction uridine(2552) in 23S rRNA + S-adenosyl-L-methionine = 2'-O-methyluridine(2552) in 23S rRNA + S-adenosyl-L-homocysteine + H(+). Functionally, specifically methylates the uridine in position 2552 of 23S rRNA at the 2'-O position of the ribose in the fully assembled 50S ribosomal subunit. This is Ribosomal RNA large subunit methyltransferase E from Methanocorpusculum labreanum (strain ATCC 43576 / DSM 4855 / Z).